The following is a 323-amino-acid chain: Galectin-4 (323 aa).

Galectin domains lie at 19-150 and 194-323; these read YYQP…INFI and YFGR…YVQI. 256 to 262 lines the a beta-D-galactoside pocket; it reads WGSEEKK. Residue Ser-258 is modified to Phosphoserine.

Monomer.

Its function is as follows. Galectin that binds lactose and a related range of sugars. May be involved in the assembly of adherens junctions. The chain is Galectin-4 (LGALS4) from Homo sapiens (Human).